We begin with the raw amino-acid sequence, 384 residues long: Methylthioribose-1-phosphate isomerase (384 aa).

Asp-255 acts as the Proton donor in catalysis.

It belongs to the eIF-2B alpha/beta/delta subunits family. MtnA subfamily.

Its subcellular location is the cytoplasm. The protein resides in the nucleus. It catalyses the reaction 5-(methylsulfanyl)-alpha-D-ribose 1-phosphate = 5-(methylsulfanyl)-D-ribulose 1-phosphate. Its pathway is amino-acid biosynthesis; L-methionine biosynthesis via salvage pathway; L-methionine from S-methyl-5-thio-alpha-D-ribose 1-phosphate: step 1/6. In terms of biological role, catalyzes the interconversion of methylthioribose-1-phosphate (MTR-1-P) into methylthioribulose-1-phosphate (MTRu-1-P). This chain is Methylthioribose-1-phosphate isomerase (mri1), found in Talaromyces stipitatus (strain ATCC 10500 / CBS 375.48 / QM 6759 / NRRL 1006) (Penicillium stipitatum).